A 453-amino-acid polypeptide reads, in one-letter code: Ribosomal protein uS12 methylthiotransferase RimO (453 aa).

Positions 5–120 (PKVGFVSLGC…VMQAVHSHLP (116 aa)) constitute an MTTase N-terminal domain. Residues C14, C50, C79, C151, C155, and C158 each contribute to the [4Fe-4S] cluster site. One can recognise a Radical SAM core domain in the interval 137 to 382 (LTPRHYAYLK…MEVAEEVSAN (246 aa)). Positions 385 to 453 (QRKIGKTLKV…ADGHDLWGEV (69 aa)) constitute a TRAM domain.

It belongs to the methylthiotransferase family. RimO subfamily. It depends on [4Fe-4S] cluster as a cofactor.

It localises to the cytoplasm. It catalyses the reaction L-aspartate(89)-[ribosomal protein uS12]-hydrogen + (sulfur carrier)-SH + AH2 + 2 S-adenosyl-L-methionine = 3-methylsulfanyl-L-aspartate(89)-[ribosomal protein uS12]-hydrogen + (sulfur carrier)-H + 5'-deoxyadenosine + L-methionine + A + S-adenosyl-L-homocysteine + 2 H(+). Catalyzes the methylthiolation of an aspartic acid residue of ribosomal protein uS12. This is Ribosomal protein uS12 methylthiotransferase RimO from Burkholderia orbicola (strain MC0-3).